Reading from the N-terminus, the 93-residue chain is Small ribosomal subunit protein uS19 (93 aa).

Belongs to the universal ribosomal protein uS19 family.

Protein S19 forms a complex with S13 that binds strongly to the 16S ribosomal RNA. This is Small ribosomal subunit protein uS19 from Wolinella succinogenes (strain ATCC 29543 / DSM 1740 / CCUG 13145 / JCM 31913 / LMG 7466 / NCTC 11488 / FDC 602W) (Vibrio succinogenes).